The following is a 399-amino-acid chain: Elongation factor Tu (399 aa).

One can recognise a tr-type G domain in the interval 10-204 (KPHVNIGTIG…AVDASIPEPE (195 aa)). Positions 19–26 (GHVDHGKT) are G1. Residue 19 to 26 (GHVDHGKT) participates in GTP binding. T26 lines the Mg(2+) pocket. The segment at 60–64 (GITIN) is G2. Residues 81–84 (DCPG) form a G3 region. GTP is bound by residues 81-85 (DCPGH) and 136-139 (NKCD). The tract at residues 136–139 (NKCD) is G4. Positions 174–176 (SGL) are G5.

The protein belongs to the TRAFAC class translation factor GTPase superfamily. Classic translation factor GTPase family. EF-Tu/EF-1A subfamily. As to quaternary structure, monomer.

Its subcellular location is the cytoplasm. The catalysed reaction is GTP + H2O = GDP + phosphate + H(+). GTP hydrolase that promotes the GTP-dependent binding of aminoacyl-tRNA to the A-site of ribosomes during protein biosynthesis. The sequence is that of Elongation factor Tu from Prochlorococcus marinus (strain MIT 9312).